Here is an 824-residue protein sequence, read N- to C-terminus: MSMSHLYGKDEDSDGVEMENFEITDWDLQNEFNPNRRKHFQTKEEATYGMWAEHDSDDERPSFGGKRSRDYSAPVNFISAGIRKPAAEEKSDSDSDSETQSRRENFPKDFEAKKLRTGGNFKPSQRTFAGGIKSNTDFGSWERHTKGIGQKLLQKMGYMPGRGLGKNAQGIIAPIEAKQRRGKGAVGAYGSERTKQSIKDFPVVDSEEEEEKDFQKEMSQWRKEPGGGKKKPKYSYKTVEELKAKGRVGKSLSAPQKEISQVKVIDMTGREQKVYYSYSQLAQKHNIPGEAPGQGVKEEKPQGFALPELEHNLQLLIDMTEQEIIQNDRQLQYEQDMVVNLTHELEKLSEVLEREDKAIENLSKVLETVEECERRIQPTCDNPLTLEECARIFEMLQDKYYEEYKMSEKADLSVAIVYPLMKDYFKDWNPLRDPNYGTDVMSKWKNLLEEGHLSHSAHDAAMDPYHRLLWEMWVPFLRNIIAQWQPRNCAPMADFLDSWVHLLPVWILDNILDQLIFPKLQKEVENWNPLTDTVPIHSWIHPWLPMMQSRLEPLFSPIRNKLSNALQKWHPSDSSAKLILQPWKEVFTPGSWEAFMVKNIVPKLGMCLSEFVINPHQQHMEVFHWVTDWEGMVALSSIVGLLEKHFFPKWLQVLCSWLSNNPNYEEITKWYLGWKSMFSDLVLAHPAIKDKFNEALDIMNRAVSSSVGAYMQPGARESIAYLTQTEKRKDFQYEAMQERRDAESIAQRGIGAAAAVPMNFKDLIQSKAEEHNIVFMPLIGKRHEGKQLYNFNRIVIYIDRGVVFVQGEKTWVPTSLQSLIDMAK.

A disordered region spans residues 1 to 135 (MSMSHLYGKD…RTFAGGIKSN (135 aa)). The span at 11 to 25 (EDSDGVEMENFEITD) shows a compositional bias: acidic residues. Basic and acidic residues-rich tracts occupy residues 41–61 (QTKE…DERP) and 85–114 (PAAE…EAKK). Positions 122–135 (KPSQRTFAGGIKSN) are enriched in polar residues. The G-patch domain maps to 145 to 191 (TKGIGQKLLQKMGYMPGRGLGKNAQGIIAPIEAKQRRGKGAVGAYGS).

The protein belongs to the TFP11/STIP family. In terms of assembly, identified in the spliceosome C complex.

It localises to the nucleus. Involved in pre-mRNA splicing, specifically in spliceosome disassembly during late-stage splicing events. This Xenopus laevis (African clawed frog) protein is Tuftelin-interacting protein 11 (tfip11).